A 206-amino-acid chain; its full sequence is Adenylate kinase (206 aa).

Residue 10 to 15 (GAGKGT) coordinates ATP. The NMP stretch occupies residues 30–59 (STGDILREAVQKGTPLGKKAKEYMERGELV). Residues T31, 57–59 (ELV), 82–85 (GFPR), and Q89 each bind AMP. Residues R120, R124, and 133–134 (VY) contribute to the ATP site. Positions 123–153 (GRRINPETGEVYHVKYNPPPPGVKVIQREDD) are LID. Residue R161 participates in AMP binding. K189 is a binding site for ATP.

The protein belongs to the adenylate kinase family. As to quaternary structure, monomer.

The protein localises to the cytoplasm. The catalysed reaction is AMP + ATP = 2 ADP. Its pathway is purine metabolism; AMP biosynthesis via salvage pathway; AMP from ADP: step 1/1. Functionally, catalyzes the reversible transfer of the terminal phosphate group between ATP and AMP. Plays an important role in cellular energy homeostasis and in adenine nucleotide metabolism. The sequence is that of Adenylate kinase from Aquifex aeolicus (strain VF5).